Reading from the N-terminus, the 1033-residue chain is Isoleucine--tRNA ligase 2 (1033 aa).

The 'HIGH' region signature appears at 47–57; that stretch reads PTANGLPHVGH. A 'KMSKS' region motif is present at residues 590–594; the sequence is KMSKS. Lys593 serves as a coordination point for ATP.

Belongs to the class-I aminoacyl-tRNA synthetase family. IleS type 2 subfamily. As to quaternary structure, monomer. Zn(2+) is required as a cofactor.

The protein resides in the cytoplasm. It carries out the reaction tRNA(Ile) + L-isoleucine + ATP = L-isoleucyl-tRNA(Ile) + AMP + diphosphate. Catalyzes the attachment of isoleucine to tRNA(Ile). As IleRS can inadvertently accommodate and process structurally similar amino acids such as valine, to avoid such errors it has two additional distinct tRNA(Ile)-dependent editing activities. One activity is designated as 'pretransfer' editing and involves the hydrolysis of activated Val-AMP. The other activity is designated 'posttransfer' editing and involves deacylation of mischarged Val-tRNA(Ile). The chain is Isoleucine--tRNA ligase 2 from Bacillus cereus (strain ATCC 14579 / DSM 31 / CCUG 7414 / JCM 2152 / NBRC 15305 / NCIMB 9373 / NCTC 2599 / NRRL B-3711).